Reading from the N-terminus, the 209-residue chain is ATP synthase subunit b 2 (209 aa).

Residues 9–29 form a helical membrane-spanning segment; sequence WWGWVTLSVLVMVAGDGTLAF.

This sequence belongs to the ATPase B chain family. In terms of assembly, F-type ATPases have 2 components, F(1) - the catalytic core - and F(0) - the membrane proton channel. F(1) has five subunits: alpha(3), beta(3), gamma(1), delta(1), epsilon(1). F(0) has three main subunits: a(1), b(2) and c(10-14). The alpha and beta chains form an alternating ring which encloses part of the gamma chain. F(1) is attached to F(0) by a central stalk formed by the gamma and epsilon chains, while a peripheral stalk is formed by the delta and b chains.

It is found in the cell inner membrane. F(1)F(0) ATP synthase produces ATP from ADP in the presence of a proton or sodium gradient. F-type ATPases consist of two structural domains, F(1) containing the extramembraneous catalytic core and F(0) containing the membrane proton channel, linked together by a central stalk and a peripheral stalk. During catalysis, ATP synthesis in the catalytic domain of F(1) is coupled via a rotary mechanism of the central stalk subunits to proton translocation. Its function is as follows. Component of the F(0) channel, it forms part of the peripheral stalk, linking F(1) to F(0). The protein is ATP synthase subunit b 2 of Desulfosudis oleivorans (strain DSM 6200 / JCM 39069 / Hxd3) (Desulfococcus oleovorans).